The following is a 403-amino-acid chain: Chalcone synthase 3 (403 aa).

C170 is a catalytic residue.

Belongs to the thiolase-like superfamily. Chalcone/stilbene synthases family.

It catalyses the reaction (E)-4-coumaroyl-CoA + 3 malonyl-CoA + 3 H(+) = 2',4,4',6'-tetrahydroxychalcone + 3 CO2 + 4 CoA. It functions in the pathway secondary metabolite biosynthesis; flavonoid biosynthesis. Its function is as follows. The primary product of this enzyme is 4,2',4',6'-tetrahydroxychalcone (also termed naringenin-chalcone or chalcone) which can under specific conditions spontaneously isomerize into naringenin. The polypeptide is Chalcone synthase 3 (CHS3) (Gerbera hybrida (Daisy)).